A 623-amino-acid chain; its full sequence is tRNA 5-methylaminomethyl-2-thiouridine biosynthesis bifunctional protein MnmC (623 aa).

Residues 1-244 are tRNA (mnm(5)s(2)U34)-methyltransferase; the sequence is MCVSSSIQTA…KREMLKAIWP (244 aa). The segment at 268–623 is FAD-dependent cmnm(5)s(2)U34 oxidoreductase; that stretch reads IGAGIAGLHC…VKIKKPYYSS (356 aa).

The protein in the N-terminal section; belongs to the methyltransferase superfamily. tRNA (mnm(5)s(2)U34)-methyltransferase family. It in the C-terminal section; belongs to the DAO family. Requires FAD as cofactor.

Its subcellular location is the cytoplasm. It catalyses the reaction 5-aminomethyl-2-thiouridine(34) in tRNA + S-adenosyl-L-methionine = 5-methylaminomethyl-2-thiouridine(34) in tRNA + S-adenosyl-L-homocysteine + H(+). In terms of biological role, catalyzes the last two steps in the biosynthesis of 5-methylaminomethyl-2-thiouridine (mnm(5)s(2)U) at the wobble position (U34) in tRNA. Catalyzes the FAD-dependent demodification of cmnm(5)s(2)U34 to nm(5)s(2)U34, followed by the transfer of a methyl group from S-adenosyl-L-methionine to nm(5)s(2)U34, to form mnm(5)s(2)U34. The protein is tRNA 5-methylaminomethyl-2-thiouridine biosynthesis bifunctional protein MnmC of Acinetobacter baylyi (strain ATCC 33305 / BD413 / ADP1).